The primary structure comprises 2452 residues: MTPLDAPGAPAPIAVVGMGCRFGGGATDPQKLWKLLEEGGSAWSKIPPSRFNVGGVYHPNGQRVGSCMDPQYRLILEVVYEALEAGMYYIPWFHTWVLTLHGSAAGIPLEQVSGSKTGVFAGTMYHDYQGSFQRQPEALPRYFITGNAGTMLANRVSHFYDLRGPSVSIDTACSTTLTALHLAIQSLRAGESDMAIVAGANLLLNPDVFTTMSNLGFLSPDGISYSFDSRADGYGRGEGVAAIVLKTLPHAVRDGDPIRLIVRETAINQDGRTLAISTPSGEAQERLIRDCYQKARLDPKQTSYVEAHGTGTGAGDPLELGVISAAFPRQQIQVGSVKANIGHTEAIPLSSQSWIPTDGVCRASINNFGFGGANAHAIVERYAPFAETSMCSPNGYPGNYDGHVETDQAHIYVLSAKDENSCMRMVSRLCDYATHAREADDWQLLANMAYTLGSRRSNFRWKAVCTAHNLTSLAQNLAGDGMRPSKSAEQVRLGWVFTGQGAQWFAMGQELSRPETESRVDQAEFSLPLSTALQIALVRLLWSWNIQPVAVTSHSSGEAAAAYAIGALTARSAIGISYIRGALTARDRLASVHKGAMLAVGLSRSEVGIYIRQVPLQSEECLVVGCINSPSSVTVSGDLSAIAKLEELLHADRIFARRLKVTQAFHSSHMNSMTDAFRAGLTELFGADPSDAANANKDVIYASPRTGDRMHDFNSLRDPMHWVECMLYPVEFESAFRQMCLDENDHMPKVDRIIEIGPHGALGGPIKQIMQLPELAPCDIPYLSCLSRGKSSLSTLRLLASELIRAGFPVDLNAINFPRGCEAARVQVLSDLPPYPWNHETRYWKEPRISQSARQRKGPVHDLIGLQEPLNLPLARSWHNVLRVSDLPWLRDHVVGSHIVFPGAGFVCMAVIGISTLCSSDHESADFSYILRDVNFAQALILPADGEEGIDLRLTICAPDQSLGSQDWQRFLVHSITADKNDWTEHCTGLVRVDMDQPASSLSNPQRADPRPWSRKTAPQDLWDSLHRVGIRHGPLFQNITRIESDGRESWCTFAIADTASAMPHAYESQHIVHPTTLDSAIQAAYTTLPFAGSRIKSAMVPARVGCMKISSRLADLEARDMLRAQAKMHSQSHCALVTDVAVFDEADPFGGPVMELEGLVFQSLGASLGTSGRDSTDTGNTCSSWHWAPDISLVNPVWLERTLDTGIQKHEIGVILELRRCSVHFIQEAMESLSVGDVARLSGHLAKFYAWMQAQLACAQNGELGPESSSWTRDNEHARCSLRSRVVAGSTNGEMICRLGSVLPAILRREVDPLEVMMDGHLLSRYYVDALKWSRSNAQASELVRLCCHKNPRARILEIGGGTGGCTQLVVDSLGPNPPVGRYDFTDVSAGFFEAARKRFAGWQDVMDFRKLDIEDDPEAQGFVCGSYDVVLACQVLHATSNMQRTLTNVRKLLKPGGKLILVETTRDELDLFFTFGLLPGWWLSEEPERQSTPSLSPTMWRSMLHATGFNGVEVEARDCDSDEFYMISTMMSTAVQATPTSCSDKLPEVLLVYVDSSTPMSWISDLQGAIRCRNCSVTSLQALRQVPPTEGQMCVFLGEMEHSMLGSVTNDDFTLLTSMLQLAGGALWVTRGATMKSDDPLKALHLGLLRTMRNESHGKRFVSLDLDPSRNPWTGDSRDAIVSVLDLVSMSDEKEFDYAERGGVIHVPRAFSDSINGGEEDGYALEPFQDSQHLLRLDIRTPGLLDSLYFRKRSVDPYEPDKLPDDWVEIEPRAFGLNFRDIMVAMGQLESNVMGFECAGVVTSLSETARTIAPGLAVGDRVCALMNGHWASRVTTSRTNVVRIPETLSFPHAASIPLAFTTAYISLYTVARILPGETVLIHAGAGGVGQAAIILAQLTGAEVFTTAGSEAKRNHLIDKFHLDPDHVFSSRDSSFVDGIKTRTSGKGVDVVLNSLAGPLLQKSFDCLARFGRFVEIGKKDLEQNSRLDMSTFVRNVSFSSVDILYWQQAKSAEIFQALSEVILLWGRTAIGLIHPISEYPMSALEKAFRTMQSGQHVGKIVVTVAPDDAVLVRQERMPLFLKPNVSYLVAGGLGGIGRRICEWLVDRGARYLIILSRTARVDPVVTSLQERGCTVSVQACDVADKSQLEAALQQCRAENLPPIRGVIQGAMVLKDALVSQMTADGFHAALRPKVQGSWNLHRIASDVDFFVMLSSLVGVMGGAGQANYAAAGAFQDALAEHRMAHNQPAVTIDLGMVQSIGYVAETDSAVAERLQRIGYQPLHEEEVLAVLEQAMSPVCSPTAPTRPAVIVTGINTRPGPHWAHADWMQEARFAGIKYRDPLRDNNGALPLTLAEDDNLHARLNRATSQQASIAVIMEAMGRKLISMFGLTDSEMSATQTLAGIGVDSLVAIELRNWITARFNVDISVFELMEGRTIAKVAEVVLQRYKP.

One can recognise a Ketosynthase family 3 (KS3) domain in the interval 10–381; it reads PAPIAVVGMG…GANAHAIVER (372 aa). Residues cysteine 173, histidine 308, and histidine 343 each act as for beta-ketoacyl synthase activity in the active site. The interval 496-790 is malonyl-CoA:ACP transacylase (MAT) domain; it reads VFTGQGAQWF…PYLSCLSRGK (295 aa). The For malonyltransferase activity role is filled by serine 555. The tract at residues 861–998 is N-terminal hotdog fold; the sequence is HDLIGLQEPL…GLVRVDMDQP (138 aa). Residues 861–1166 form a dehydratase (DH) domain region; the sequence is HDLIGLQEPL…LEGLVFQSLG (306 aa). In terms of domain architecture, PKS/mFAS DH spans 861–1171; sequence HDLIGLQEPL…FQSLGASLGT (311 aa). The active-site Proton acceptor; for dehydratase activity is histidine 893. Residues 997–1017 form a disordered region; that stretch reads QPASSLSNPQRADPRPWSRKT. Positions 1012-1171 are C-terminal hotdog fold; sequence PWSRKTAPQD…FQSLGASLGT (160 aa). Aspartate 1079 serves as the catalytic Proton donor; for dehydratase activity. The methyltransferase (CMet) domain stretch occupies residues 1343–1528; the sequence is ELVRLCCHKN…RDCDSDEFYM (186 aa). Positions 1745–2064 are enoylreductase (ER) domain; that stretch reads GLLDSLYFRK…SGQHVGKIVV (320 aa). A ketoreductase (KR) domain region spans residues 2088–2260; sequence SYLVAGGLGG…AVTIDLGMVQ (173 aa). Residues 2373–2450 enclose the Carrier domain; sequence ASIAVIMEAM…KVAEVVLQRY (78 aa). An O-(pantetheine 4'-phosphoryl)serine modification is found at serine 2410.

Interacts with LovD. Pantetheine 4'-phosphate is required as a cofactor.

The catalysed reaction is holo-[2-methylbutanoate polyketide synthase] + 2 malonyl-CoA + S-adenosyl-L-methionine + 2 NADPH + 3 H(+) = (S)-2-methylbutanoyl-[2-methylbutanoate polyketide synthase] + S-adenosyl-L-homocysteine + 2 CO2 + 2 NADP(+) + 2 CoA + H2O. The protein operates within polyketide biosynthesis; lovastatin biosynthesis. Its function is as follows. Lovastatin diketide synthase; part of the gene cluster that mediates the biosynthesis of lovastatin (also known as mevinolin, mevacor or monacolin K), a hypolipidemic inhibitor of (3S)-hydroxymethylglutaryl-coenzyme A (HMG-CoA) reductase (HMGR). The first step in the biosynthesis of lovastatin is the production of dihydromonacolin L acid by the lovastatin nonaketide synthase lovB and the trans-acting enoyl reductase lovC via condensation of one acetyl-CoA unit and 8 malonyl-CoA units. Dihydromonacolin L acid is released from lovB by the thioesterase lovG. Next, dihydromonacolin L acid is oxidized by the dihydromonacolin L monooxygenase lovA twice to form monacolin J acid. The 2-methylbutyrate moiety of lovastatin is synthesized by the lovastatin diketide synthase lovF via condensation of one acetyl-CoA unit and one malonyl-CoA unit. Finally, the covalent attachment of this moiety to monacolin J acid is catalyzed by the transesterase lovD to yield lovastatin. LovD has broad substrate specificity and can also convert monacolin J to simvastatin using alpha-dimethylbutanoyl-S-methyl-3-mercaptopropionate (DMB-S-MMP) as the thioester acyl donor, and can also catalyze the reverse reaction and function as hydrolase in vitro. LovD has much higher activity with LovF-bound 2-methylbutanoate than with free diketide substrates. The protein is Lovastatin diketide synthase lovF of Aspergillus terreus (strain NIH 2624 / FGSC A1156).